The chain runs to 382 residues: Anhydro-N-acetylmuramic acid kinase (382 aa).

22–29 (GTSMDGVD) is an ATP binding site.

The protein belongs to the anhydro-N-acetylmuramic acid kinase family.

The enzyme catalyses 1,6-anhydro-N-acetyl-beta-muramate + ATP + H2O = N-acetyl-D-muramate 6-phosphate + ADP + H(+). The protein operates within amino-sugar metabolism; 1,6-anhydro-N-acetylmuramate degradation. It participates in cell wall biogenesis; peptidoglycan recycling. Functionally, catalyzes the specific phosphorylation of 1,6-anhydro-N-acetylmuramic acid (anhMurNAc) with the simultaneous cleavage of the 1,6-anhydro ring, generating MurNAc-6-P. Is required for the utilization of anhMurNAc either imported from the medium or derived from its own cell wall murein, and thus plays a role in cell wall recycling. The chain is Anhydro-N-acetylmuramic acid kinase from Burkholderia lata (strain ATCC 17760 / DSM 23089 / LMG 22485 / NCIMB 9086 / R18194 / 383).